The following is a 368-amino-acid chain: 3-dehydroquinate synthase (368 aa).

It belongs to the archaeal-type DHQ synthase family.

It catalyses the reaction 2-amino-2,3,7-trideoxy-D-lyxo-hept-6-ulosonate + NAD(+) + H2O = 3-dehydroquinate + NH4(+) + NADH + H(+). Catalyzes the oxidative deamination and cyclization of 2-amino-3,7-dideoxy-D-threo-hept-6-ulosonic acid (ADH) to yield 3-dehydroquinate (DHQ), which is fed into the canonical shikimic pathway of aromatic amino acid biosynthesis. The sequence is that of 3-dehydroquinate synthase from Methanobrevibacter smithii (strain ATCC 35061 / DSM 861 / OCM 144 / PS).